The primary structure comprises 213 residues: Cytochrome b6 (213 aa).

Residues 30–50 (IFYCLGGLTLLAFLVQCVTGL) traverse the membrane as a helical segment. C33 is a heme c binding site. Positions 84 and 98 each coordinate heme b. A run of 3 helical transmembrane segments spans residues 88 to 108 (ANLM…TGSF), 114 to 134 (LNWL…FTGY), and 184 to 204 (LHVM…FIMI). The heme b site is built by H185 and H200.

It belongs to the cytochrome b family. PetB subfamily. In terms of assembly, the subunits of the cytochrome bc complex are a Rieske Fe-S protein (PetC), cytochrome b6 (PetB), subunit IV (PetD), and a diheme cytochrome c (PetX). The cofactor is heme b. Heme c is required as a cofactor.

It localises to the cell membrane. Component of the cytochrome bc complex which donates electrons to the photosynthetic reaction center. The polypeptide is Cytochrome b6 (Heliobacterium mobile (Heliobacillus mobilis)).